Reading from the N-terminus, the 88-residue chain is Small ribosomal subunit protein uS15 (88 aa).

This sequence belongs to the universal ribosomal protein uS15 family. As to quaternary structure, part of the 30S ribosomal subunit. Forms a bridge to the 50S subunit in the 70S ribosome, contacting the 23S rRNA.

Functionally, one of the primary rRNA binding proteins, it binds directly to 16S rRNA where it helps nucleate assembly of the platform of the 30S subunit by binding and bridging several RNA helices of the 16S rRNA. In terms of biological role, forms an intersubunit bridge (bridge B4) with the 23S rRNA of the 50S subunit in the ribosome. The chain is Small ribosomal subunit protein uS15 from Borrelia garinii subsp. bavariensis (strain ATCC BAA-2496 / DSM 23469 / PBi) (Borreliella bavariensis).